The following is a 3567-amino-acid chain: Zinc finger homeobox protein 4 (3567 aa).

At M1 the chain carries N-acetylmethionine. Disordered stretches follow at residues 1–54 (METC…LKTD), 425–480 (LSHS…AYSN), 522–545 (TSSS…VRAS), and 565–611 (SKDS…SPGS). The segment covering 9–28 (ISRQENGQSTSKLCGTTQLD) has biased composition (polar residues). 2 stretches are compositionally biased toward basic and acidic residues: residues 39–54 (EPDR…LKTD) and 434–452 (KMSE…KESN). The span at 468–480 (EPGDEDEEDAYSN) shows a compositional bias: acidic residues. C2H2-type zinc fingers lie at residues 613–636 (IECP…TMMH), 644–667 (LKCP…KEKH), and 699–723 (FRCE…SDKH). The C2H2-type 4; degenerate zinc finger occupies 767–789 (WRCEVCDYETNVARNLRIHMTSE). 3 consecutive C2H2-type zinc fingers follow at residues 917-941 (YQCK…TDKH), 973-995 (LKCN…TTNH), and 1021-1045 (YYCA…SVKH). Residues 1098 to 1160 (EQHEEAEGAI…EDVATKRSKP (63 aa)) are disordered. Basic and acidic residues-rich tracts occupy residues 1120–1132 (TSER…KNSN) and 1148–1160 (AKEE…RSKP). K1149 is covalently cross-linked (Glycyl lysine isopeptide (Lys-Gly) (interchain with G-Cter in SUMO2)). 2 consecutive C2H2-type zinc fingers follow at residues 1172 to 1195 (YQCP…LSQH) and 1201 to 1224 (ICCP…THLH). Residues 1254 to 1324 (AASEKSERDT…WNKNSSKDVK (71 aa)) are disordered. Basic and acidic residues predominate over residues 1281–1310 (MDDKSMAGLEDSKANVEVKNEEQKPTKEPL). Residues K1299 and K1324 each participate in a glycyl lysine isopeptide (Lys-Gly) (interchain with G-Cter in SUMO2) cross-link. 2 C2H2-type zinc fingers span residues 1352-1374 (YRCN…SQYH) and 1380-1403 (TMCN…EAGH). Positions 1429-1480 (ETMSQDDHGLEQEMEREYEVDHEGKASPVGSDSSSIPDDMGSEPKRTLPFRK) are disordered. Basic and acidic residues predominate over residues 1433-1453 (QDDHGLEQEMEREYEVDHEGK). The C2H2-type 12 zinc finger occupies 1496 to 1522 (YKCTVCKESFTQKNILLVHYNSVSHLH). A Glycyl lysine isopeptide (Lys-Gly) (interchain with G-Cter in SUMO2) cross-link involves residue K1546. The C2H2-type 13 zinc-finger motif lies at 1548–1572 (YKCSICNVAYSQSSTLEIHMRSVLH). 2 stretches are compositionally biased toward low complexity: residues 1761 to 1772 (TQPQLQPQKQQQ) and 1779 to 1791 (QQQQ…LLKQ). 2 disordered regions span residues 1761 to 1791 (TQPQ…LLKQ) and 1809 to 1858 (SYKE…IASG). Residue K1790 forms a Glycyl lysine isopeptide (Lys-Gly) (interchain with G-Cter in SUMO2) linkage. A compositionally biased stretch (basic and acidic residues) spans 1809–1845 (SYKEAEDISEKPEKPKQEFISEGEGLKEGKDTKKQKS). The C2H2-type 14 zinc-finger motif lies at 1901-1924 (LECGTCGKLFSNVLILKSHQEHVH). Residues 1948–2024 (YPISPSSPET…PPSAPPQVQL (77 aa)) are disordered. Composition is skewed to pro residues over residues 1955–1974 (PETP…PPQP) and 1991–2019 (QAPP…PSAP). 2 DNA-binding regions (homeobox) span residues 2084-2143 (FKRP…RQRN) and 2181-2240 (KRSS…RKSY). Residues 2267–2291 (YQCKKCNVVFPRIFDLITHQKKQCY) form a C2H2-type 15; degenerate zinc finger. Disordered regions lie at residues 2289 to 2311 (QCYK…MDAT) and 2328 to 2431 (AKNA…SPLQ). Over residues 2293–2309 (DEDDDAQDESQTEDSMD) the composition is skewed to acidic residues. The span at 2331 to 2345 (AAAPAASSGSGTSTP) shows a compositional bias: low complexity. The segment covering 2352–2370 (PEPEKTSPKPEYPAEKPKQ) has biased composition (basic and acidic residues). Positions 2419-2431 (SASQTPVPSSPLQ) are enriched in polar residues. Residues 2448–2470 (YQCDQCTVAFPTLELWQEHQHMH) form a C2H2-type 16 zinc finger. The segment covering 2507–2530 (LGSSLTQMPPQASSSHTTAPTTVA) has biased composition (polar residues). The segment at 2507–2564 (LGSSLTQMPPQASSSHTTAPTTVAASLKRKLDDKEDNNCSEKEGGNSGEDQHRDKRLR) is disordered. Positions 2535–2559 (RKLDDKEDNNCSEKEGGNSGEDQHR) are enriched in basic and acidic residues. The segment at residues 2560-2619 (DKRLRTTITPEQLEILYEKYLLDSNPTRKMLDHIAREVGLKKRVVQVWFQNTRARERKGQ) is a DNA-binding region (homeobox 3). Residues 2630 to 2653 (KRCPFCRALFKAKSALESHIRSRH) form a C2H2-type 17 zinc finger. Residue S2663 is modified to Phosphoserine. The segment covering 2764–2785 (AISDATTGDEGNTEMESTTGSS) has biased composition (polar residues). 2 disordered regions span residues 2764–2811 (AISD…TTPT) and 2829–2885 (HFND…PGHK). Positions 2830–2839 (FNDKDGDHDQ) are enriched in basic and acidic residues. Residues 2862 to 2874 (PSSPNPFGSSNPF) are compositionally biased toward low complexity. Positions 2884–2943 (HKRFRTQMSNLQLKVLKACFSDYRTPTMQECEMLGNEIGLPKRVVQVWFQNARAKEKKFK) form a DNA-binding region, homeobox 4. The segment at 2962-2986 (PECTLCGVKYSARLSIRDHIFSKQH) adopts a C2H2-type 18 zinc-finger fold. Low complexity predominate over residues 3092-3110 (SATSSPALSLSSAPTKPLL). Disordered regions lie at residues 3092 to 3172 (SATS…KEEK) and 3281 to 3337 (LQKQ…LESK). Residues 3111–3125 (QTPPPPPPPPPPPPS) are compositionally biased toward pro residues. The segment covering 3126–3135 (SSLSGQQTEQ) has biased composition (polar residues). Residues 3153-3172 (IKEEELEATKPEKHPKKEEK) are compositionally biased toward basic and acidic residues. K3154 is covalently cross-linked (Glycyl lysine isopeptide (Lys-Gly) (interchain with G-Cter in SUMO2)). Residues 3265 to 3294 (ALLQQYQQYQQNLQESLQKQQKQQQEQQQK) adopt a coiled-coil conformation. Residues 3281-3293 (LQKQQKQQQEQQQ) are compositionally biased toward low complexity. Polar residues predominate over residues 3294–3314 (KPVQAKTSKVESDQPQNSNDA). The span at 3315 to 3337 (SETKEDKSTATESTKEEPQLESK) shows a compositional bias: basic and acidic residues. The C2H2-type 19; degenerate zinc finger occupies 3354-3378 (FICRKCQMMFTDEDAAVNHQKSFCY). The segment at 3398–3422 (YQCLACDVAISGNEALSQHLQSSLH) adopts a C2H2-type 20 zinc-finger fold. Disordered regions lie at residues 3443-3462 (HSVC…AASS) and 3511-3534 (STSG…ELSQ). Positions 3447–3462 (SPNPNTTSTSQSAASS) are enriched in low complexity.

The protein belongs to the krueppel C2H2-type zinc-finger protein family. Expressed in brain, skeletal muscle and liver. Very low expression in stomach.

The protein resides in the nucleus. In terms of biological role, may play a role in neural and muscle differentiation. May be involved in transcriptional regulation. This is Zinc finger homeobox protein 4 (ZFHX4) from Homo sapiens (Human).